A 1076-amino-acid polypeptide reads, in one-letter code: Vacuolar membrane protease (1076 aa).

Residues 1-11 (MKCYNPSAFVP) lie on the Cytoplasmic side of the membrane. Residues 12–32 (MAVTLVTVVIYLGVFIPLLII) form a helical membrane-spanning segment. Residues 33 to 437 (HETVPSAPDD…TVFAVFRLRT (405 aa)) lie on the Vacuolar side of the membrane. 3 N-linked (GlcNAc...) asparagine glycosylation sites follow: Asn50, Asn99, and Asn156. Zn(2+) contacts are provided by His220 and Asp232. Glu266 serves as the catalytic Proton acceptor. Residues Glu267, Glu292, and His364 each contribute to the Zn(2+) site. A helical transmembrane segment spans residues 438 to 458 (LFAWSLTLLIASPLILFAVSY). Topologically, residues 459–491 (LLNRQEKFYFFAGSIKSKNPEDEPISLGGWRGA) are cytoplasmic. Residues 492–512 (FRFPITLFITSAITFACASLI) form a helical membrane-spanning segment. The Vacuolar segment spans residues 513–525 (NKINPMIIYSSPY). Residues 526-546 (AVWSMSATLFFSVFWFIMAGC) form a helical membrane-spanning segment. Residues 547-556 (NFVRPSALQR) lie on the Cytoplasmic side of the membrane. A helical membrane pass occupies residues 557–577 (GYAFMWMFVFGWILLVVATVY). Residues 578-584 (EDRFKIS) are Vacuolar-facing. The chain crosses the membrane as a helical span at residues 585–605 (GGYLFVFYEAAIFLATLIAIC). The Cytoplasmic portion of the chain corresponds to 606–738 (EQFALPRKST…LPIWTWLVQY (133 aa)). Disordered stretches follow at residues 619 to 662 (DSQN…EETV) and 701 to 720 (SYDGPADHDDKKGHKKHPYG). Over residues 621–632 (QNDHSDNQDHHH) the composition is skewed to basic and acidic residues. A compositionally biased stretch (acidic residues) spans 647 to 660 (PNADDEAAEEDQEE). The helical transmembrane segment at 739-759 (LLVGPFILVILGQVGLFLVAA) threads the bilayer. Residues 760-771 (LHQTGTDGSPLF) lie on the Vacuolar side of the membrane. The chain crosses the membrane as a helical span at residues 772–792 (LPYLIVAIFSILLLLPVTPFI). The Cytoplasmic portion of the chain corresponds to 793 to 799 (HRLTHHM). A helical membrane pass occupies residues 800–820 (PTFFFLVFIGTLIYNLVAFPF). The Vacuolar portion of the chain corresponds to 821-1076 (SPNNRYKAYF…LGLAFLLAYV (256 aa)). Asn912 carries an N-linked (GlcNAc...) asparagine glycan.

Belongs to the peptidase M28 family. Requires Zn(2+) as cofactor.

Its subcellular location is the vacuole membrane. In terms of biological role, may be involved in vacuolar sorting and osmoregulation. The polypeptide is Vacuolar membrane protease (Sclerotinia sclerotiorum (strain ATCC 18683 / 1980 / Ss-1) (White mold)).